We begin with the raw amino-acid sequence, 119 residues long: Fluoride-specific ion channel FluC (119 aa).

Helical transmembrane passes span 5 to 25, 30 to 50, 59 to 79, and 92 to 112; these read ILPL…LNLA, LSPA…IGIF, WKLL…GFSL, and SALA…WLGL. Na(+) is bound by residues Gly69 and Thr72.

This sequence belongs to the fluoride channel Fluc/FEX (TC 1.A.43) family.

It is found in the cell inner membrane. It carries out the reaction fluoride(in) = fluoride(out). Na(+) is not transported, but it plays an essential structural role and its presence is essential for fluoride channel function. Fluoride-specific ion channel. Important for reducing fluoride concentration in the cell, thus reducing its toxicity. This is Fluoride-specific ion channel FluC from Neisseria gonorrhoeae (strain NCCP11945).